Here is a 36-residue protein sequence, read N- to C-terminus: Photosystem I reaction center subunit VIII (36 aa).

The chain crosses the membrane as a helical span at residues 9 to 29 (ILVPLVGLIFPALSMALLFIY).

Belongs to the PsaI family.

Its subcellular location is the plastid. It is found in the chloroplast thylakoid membrane. In terms of biological role, may help in the organization of the PsaL subunit. This chain is Photosystem I reaction center subunit VIII, found in Pyropia yezoensis (Susabi-nori).